A 436-amino-acid polypeptide reads, in one-letter code: Homeobox protein PKNOX1 (436 aa).

The disordered stretch occupies residues 24 to 49 (LKTEQDPNCSEPDVEGVSPPPVGSQT). Ser-33 and Ser-41 each carry phosphoserine. The MEIS N-terminal domain occupies 80 to 163 (GSEGTTSASF…MNSETLLSGE (84 aa)). Residues 259–321 (SKNKRGVLPK…NARRRILQPM (63 aa)) constitute a DNA-binding region (homeobox; TALE-type). A disordered region spans residues 401–436 (AEQSEDDSVDSTGDGGAALAPGHLGGLVLENSDSLQ).

It belongs to the TALE/MEIS homeobox family. As to quaternary structure, interacts with MN1.

The protein resides in the nucleus. Functionally, activates transcription in the presence of PBX1A and HOXA1. This Bos taurus (Bovine) protein is Homeobox protein PKNOX1.